Here is a 354-residue protein sequence, read N- to C-terminus: Rhodopsin (354 aa).

Residues 1–36 are Extracellular-facing; sequence MNGTEGPNFYIPMSNKTGVVRSPFEYPQYYLAEPWK. 2 N-linked (GlcNAc...) asparagine glycosylation sites follow: Asn-2 and Asn-15. A helical transmembrane segment spans residues 37–61; the sequence is YSILAAYMFLLILLGFPINFMTLYV. The Cytoplasmic portion of the chain corresponds to 62–73; sequence TIQHKKLRTPLN. A helical transmembrane segment spans residues 74–96; it reads YILLNLAFANHFMVLCGFTITLY. Topologically, residues 97 to 110 are extracellular; it reads TSLHGYFVFGQSGC. Cysteines 110 and 187 form a disulfide. The chain crosses the membrane as a helical span at residues 111 to 133; that stretch reads YFEGFFATLGGEIALWSLVALAI. The 'Ionic lock' involved in activated form stabilization motif lies at 134-136; that stretch reads ERY. The Cytoplasmic segment spans residues 134-152; the sequence is ERYIVVCKPMSNFRFGENH. Residues 153-173 form a helical membrane-spanning segment; it reads AMMGVAFTWIMALACAVPPLF. Residues 174–202 are Extracellular-facing; the sequence is GWSRYIPEGMQCSCGVDYYTLKPEINNES. The helical transmembrane segment at 203–224 threads the bilayer; sequence FVIYMFVVHFLIPLIIITFCYG. At 225–252 the chain is on the cytoplasmic side; the sequence is RLVCTVKEAAAQQQESATTQKAEKEVTR. Residues 253–274 form a helical membrane-spanning segment; that stretch reads MVIIMVIFFLICWVPYAYVAFY. Residues 275–286 lie on the Extracellular side of the membrane; the sequence is IFCNQGSEFGPI. Residues 287–308 form a helical membrane-spanning segment; it reads FMTVPAFFAKSSAIYNPVIYIM. Lys-296 carries the N6-(retinylidene)lysine modification. Residues 309 to 354 are Cytoplasmic-facing; that stretch reads LNKQFRNCMITTLCCGKNPFGDDDASSAATSKTEATSVSTSQVSPA. S-palmitoyl cysteine attachment occurs at residues Cys-322 and Cys-323. Residues 332 to 354 are disordered; it reads DASSAATSKTEATSVSTSQVSPA. Positions 334-354 are enriched in low complexity; sequence SSAATSKTEATSVSTSQVSPA.

It belongs to the G-protein coupled receptor 1 family. Opsin subfamily. Post-translationally, contains one covalently linked retinal chromophore. Upon light absorption, the covalently bound 11-cis-retinal is converted to all-trans-retinal. After hydrolysis of the Schiff base and release of the covalently bound all-trans-retinal, active rhodopsin is regenerated by binding of a fresh molecule of 11-cis-retinal.

The protein resides in the membrane. The protein localises to the cell projection. It is found in the cilium. Its subcellular location is the photoreceptor outer segment. Its function is as follows. Photoreceptor required for image-forming vision at low light intensity. Required for photoreceptor cell viability after birth. Light-induced isomerization of 11-cis to all-trans retinal triggers a conformational change that activates signaling via G-proteins. Subsequent receptor phosphorylation mediates displacement of the bound G-protein alpha subunit by arrestin and terminates signaling. The protein is Rhodopsin (RHO) of Rana temporaria (European common frog).